Here is an 820-residue protein sequence, read N- to C-terminus: G-type lectin S-receptor-like serine/threonine-protein kinase At1g11300 (820 aa).

The N-terminal stretch at 1–26 is a signal peptide; that stretch reads MRLHESSSPFVCILVLSCFFLSVSLA. A Bulb-type lectin domain is found at 27–150; sequence QERAFFSGKL…SSDAYLWESF (124 aa). Topologically, residues 27–436 are extracellular; sequence QERAFFSGKL…SEIKTKDKRP (410 aa). N-linked (GlcNAc...) asparagine glycosylation is found at Asn37, Asn58, Asn87, Asn115, Asn123, Asn173, Asn211, Asn247, Asn256, and Asn282. An EGF-like; atypical domain is found at 290–326; sequence PATECDNYRRCGEFATCNPRKNPLCSCIRGFRPRNLI. Intrachain disulfides connect Cys294-Cys306 and Cys300-Cys314. Residues Asn332 and Asn351 are each glycosylated (N-linked (GlcNAc...) asparagine). The region spanning 345–425 is the PAN domain; the sequence is CERQNNNGSA…SGLDLYIRLA (81 aa). 2 cysteine pairs are disulfide-bonded: Cys379–Cys400 and Cys383–Cys389. Residue Asn404 is glycosylated (N-linked (GlcNAc...) asparagine). The helical transmembrane segment at 437–457 threads the bilayer; the sequence is ILIGTILAGGIFVVAACVLLA. Over 458 to 820 the chain is Cytoplasmic; sequence RRIVMKKRAK…NVTITDVTGR (363 aa). One can recognise a Protein kinase domain in the interval 509–788; the sequence is FSLRNKLGQG…DIPEPKQPAF (280 aa). ATP is bound by residues 515–523 and Lys537; that span reads LGQGGFGPV. Residues 598-615 form a caM-binding region; the sequence is RRAKLLDWKTRFNIINGI. Residue Asp634 is the Proton acceptor of the active site.

This sequence belongs to the protein kinase superfamily. Ser/Thr protein kinase family.

It is found in the cell membrane. The enzyme catalyses L-seryl-[protein] + ATP = O-phospho-L-seryl-[protein] + ADP + H(+). It catalyses the reaction L-threonyl-[protein] + ATP = O-phospho-L-threonyl-[protein] + ADP + H(+). In Arabidopsis thaliana (Mouse-ear cress), this protein is G-type lectin S-receptor-like serine/threonine-protein kinase At1g11300.